Reading from the N-terminus, the 299-residue chain is Diaminopimelate epimerase (299 aa).

N15, Q47, and N67 together coordinate substrate. Catalysis depends on C76, which acts as the Proton donor. Substrate is bound by residues 77-78 (GN), N163, N197, and 215-216 (ER). Residue C224 is the Proton acceptor of the active site. 225–226 (GS) is a binding site for substrate.

The protein belongs to the diaminopimelate epimerase family. In terms of assembly, homodimer.

The protein localises to the cytoplasm. It carries out the reaction (2S,6S)-2,6-diaminopimelate = meso-2,6-diaminopimelate. It functions in the pathway amino-acid biosynthesis; L-lysine biosynthesis via DAP pathway; DL-2,6-diaminopimelate from LL-2,6-diaminopimelate: step 1/1. Functionally, catalyzes the stereoinversion of LL-2,6-diaminopimelate (L,L-DAP) to meso-diaminopimelate (meso-DAP), a precursor of L-lysine and an essential component of the bacterial peptidoglycan. This Agrobacterium fabrum (strain C58 / ATCC 33970) (Agrobacterium tumefaciens (strain C58)) protein is Diaminopimelate epimerase.